Consider the following 325-residue polypeptide: Ribose-phosphate pyrophosphokinase (325 aa).

Residues 45 to 47 (NGE) and 104 to 105 (RQ) contribute to the ATP site. Mg(2+) contacts are provided by H138 and D178. K202 is an active-site residue. D-ribose 5-phosphate is bound by residues R204, D230, and 234–238 (DTGGT).

This sequence belongs to the ribose-phosphate pyrophosphokinase family. Class I subfamily. As to quaternary structure, homohexamer. The cofactor is Mg(2+).

It localises to the cytoplasm. It carries out the reaction D-ribose 5-phosphate + ATP = 5-phospho-alpha-D-ribose 1-diphosphate + AMP + H(+). The protein operates within metabolic intermediate biosynthesis; 5-phospho-alpha-D-ribose 1-diphosphate biosynthesis; 5-phospho-alpha-D-ribose 1-diphosphate from D-ribose 5-phosphate (route I): step 1/1. Functionally, involved in the biosynthesis of the central metabolite phospho-alpha-D-ribosyl-1-pyrophosphate (PRPP) via the transfer of pyrophosphoryl group from ATP to 1-hydroxyl of ribose-5-phosphate (Rib-5-P). The protein is Ribose-phosphate pyrophosphokinase of Corynebacterium efficiens (strain DSM 44549 / YS-314 / AJ 12310 / JCM 11189 / NBRC 100395).